A 664-amino-acid polypeptide reads, in one-letter code: DNA ligase (664 aa).

NAD(+) is bound by residues aspartate 30–aspartate 34, serine 79–leucine 80, and glutamate 109. Lysine 111 (N6-AMP-lysine intermediate) is an active-site residue. Residues arginine 132, glutamate 169, lysine 284, and lysine 308 each contribute to the NAD(+) site. Residues cysteine 403, cysteine 406, cysteine 421, and cysteine 427 each contribute to the Zn(2+) site. The 79-residue stretch at asparagine 586–glutamate 664 folds into the BRCT domain.

It belongs to the NAD-dependent DNA ligase family. LigA subfamily. It depends on Mg(2+) as a cofactor. Mn(2+) serves as cofactor.

It carries out the reaction NAD(+) + (deoxyribonucleotide)n-3'-hydroxyl + 5'-phospho-(deoxyribonucleotide)m = (deoxyribonucleotide)n+m + AMP + beta-nicotinamide D-nucleotide.. Its function is as follows. DNA ligase that catalyzes the formation of phosphodiester linkages between 5'-phosphoryl and 3'-hydroxyl groups in double-stranded DNA using NAD as a coenzyme and as the energy source for the reaction. It is essential for DNA replication and repair of damaged DNA. This chain is DNA ligase, found in Parabacteroides distasonis (strain ATCC 8503 / DSM 20701 / CIP 104284 / JCM 5825 / NCTC 11152).